Reading from the N-terminus, the 450-residue chain is UDP-N-acetylmuramoylalanine--D-glutamate ligase (450 aa).

115–121 (GTNGKST) is an ATP binding site.

It belongs to the MurCDEF family.

It localises to the cytoplasm. The catalysed reaction is UDP-N-acetyl-alpha-D-muramoyl-L-alanine + D-glutamate + ATP = UDP-N-acetyl-alpha-D-muramoyl-L-alanyl-D-glutamate + ADP + phosphate + H(+). The protein operates within cell wall biogenesis; peptidoglycan biosynthesis. In terms of biological role, cell wall formation. Catalyzes the addition of glutamate to the nucleotide precursor UDP-N-acetylmuramoyl-L-alanine (UMA). The chain is UDP-N-acetylmuramoylalanine--D-glutamate ligase from Syntrophotalea carbinolica (strain DSM 2380 / NBRC 103641 / GraBd1) (Pelobacter carbinolicus).